The following is a 185-amino-acid chain: Prenylated Rab acceptor protein 1 (185 aa).

Residues 1–78 (MAAQKDQQKD…RNVEYYQSNY (78 aa)) are Cytoplasmic-facing. The required for interaction with prenylated RAB3A and VAMP2 stretch occupies residues 30 to 54 (AGREWLERRRATIRPWGTFVDQQRF). 2 helical membrane passes run 79–94 (VFVFLGLILYCVVTSP) and 95–112 (MLLVALAVFFGACYILYL). Over 113-131 (RTLQSKLVLFGREVSPAHQ) the chain is Cytoplasmic. The next 2 helical transmembrane spans lie at 132 to 148 (YALAGGVSFPFFWLAGA) and 149 to 165 (GSAVFWVLGATLVLIGS). Positions 165-185 (SHAAFHQMEPADGEELQMEPV) are required for interaction with GDI1. Topologically, residues 166–185 (HAAFHQMEPADGEELQMEPV) are cytoplasmic. Residues 175–185 (ADGEELQMEPV) form a required for interaction with prenylated RAB3A and VAMP2 region. The homodimerization stretch occupies residues 175 to 185 (ADGEELQMEPV).

Belongs to the PRA1 family. Homodimer. Interacts with VAMP2 (synaptobrevin-2), GDI1, NRDG1 and PCLO. Interacts with prenylated Rab proteins (including RAB5 and RAB6), and with the members of the Ras superfamily HRAS, RHOA, TC21, and RAP1A.

The protein localises to the cell membrane. Its subcellular location is the cytoplasm. It localises to the golgi apparatus. It is found in the cytoplasmic vesicle. The protein resides in the secretory vesicle. The protein localises to the synaptic vesicle. Its function is as follows. General Rab protein regulator required for vesicle formation from the Golgi complex. May control vesicle docking and fusion by mediating the action of Rab GTPases to the SNARE complexes. In addition it inhibits the removal of Rab GTPases from the membrane by GDI1. The polypeptide is Prenylated Rab acceptor protein 1 (Rabac1) (Mus musculus (Mouse)).